A 132-amino-acid polypeptide reads, in one-letter code: Insulin-like 3 (132 aa).

Residues 1 to 21 (MDRRPLTWALVLLGPALAIAL) form the signal peptide. Position 27 is a pyrrolidone carboxylic acid (glutamine 27). Disulfide bonds link cysteine 34/cysteine 117, cysteine 46/cysteine 130, and cysteine 116/cysteine 121. Residues 67 to 104 (LLRWLEGQHLLHGLMASGDPVLVLAPQPLPQASRHHHH) constitute a propeptide, c peptide like.

It belongs to the insulin family. Heterodimer of a B chain and an A chain linked by two disulfide bonds. 20% of B chains include an extra N-terminal pentapeptide. Expressed exclusively in Leydig cells of the testis.

It localises to the secreted. Seems to play a role in testicular function. May be a trophic hormone with a role in testicular descent in fetal life. Is a ligand for LGR8 receptor. This chain is Insulin-like 3 (INSL3), found in Bos taurus (Bovine).